A 149-amino-acid chain; its full sequence is Snake venom vascular endothelial growth factor toxin 2 (149 aa).

The first 24 residues, 1-24, serve as a signal peptide directing secretion; it reads MAAYLLAVAILFCIQGWPSGTVQG. Q25 is modified (pyrrolidone carboxylic acid). Cystine bridges form between C38-C80, C69-C115, and C73-C117. The interval 118 to 149 is disordered; it reads RPRSGRVNSGKRKRNPEEGGAESQVPLGLTSF.

This sequence belongs to the PDGF/VEGF growth factor family. Snake venom VEGF subfamily. Homodimer; disulfide-linked. Interacts with VEGF receptor-1 (FLT1) with a high affinity, whereas it binds to VEGF receptor-2 (KDR) with a low affinity. Does not bind VEGF receptor-3 (FLT4). Expressed by the venom gland.

The protein localises to the secreted. Its function is as follows. Snake venom VEGFs that may contribute to venom dispersion and prey subjugation by inducing vascular permeability and hypotension. This protein induces an increase in capillary permeability after intradermal injection, as well as a drastic hypotensive effect after intravenous injection. The hypotension is mediated by nitric oxide (NO), which is produced by VEGF-activated endothelium NO synthase. Also induces angiogenesis in vitro. Like other crotalid VEGFs, this protein interacts with VEGF receptor-1 (FLT1) with a high affinity, whereas it binds to VEGF receptor-2 (KDR) with a low affinity. This is Snake venom vascular endothelial growth factor toxin 2 from Sistrurus catenatus edwardsii (Desert massasauga).